Consider the following 526-residue polypeptide: Protein ERGIC-53-like (526 aa).

The first 25 residues, 1–25 (MPAVSGPGPLFCLLLLLLDPHSPET), serve as a signal peptide directing secretion. Residues 26 to 462 (GCPPLRRFEY…QPPRASSCLQ (437 aa)) are Lumenal-facing. The L-type lectin-like domain maps to 31–252 (RRFEYKLSFK…DVLSFLTFSL (222 aa)). The N-linked (GlcNAc...) asparagine glycan is linked to Asn-75. Cysteines 176 and 215 form a disulfide. A helical membrane pass occupies residues 463-483 (PGIFLFYLLIQTVGFFGYVHF). Residues 484 to 526 (RQELNKSLQECLSTGSLPLGPAPHTPRALGILRRQPLPASMPA) lie on the Cytoplasmic side of the membrane.

As to expression, highly expressed in normal and neoplastic prostate. Also expressed in cardiac atrium, salivary gland, spleen and selective cells in the CNS.

The protein resides in the endoplasmic reticulum-Golgi intermediate compartment membrane. The protein is Protein ERGIC-53-like (LMAN1L) of Homo sapiens (Human).